The chain runs to 120 residues: Large ribosomal subunit protein uL14 (120 aa).

This sequence belongs to the universal ribosomal protein uL14 family. In terms of assembly, part of the 50S ribosomal subunit. Forms a cluster with proteins L3 and L19. In the 70S ribosome, L14 and L19 interact and together make contacts with the 16S rRNA in bridges B5 and B8.

Its function is as follows. Binds to 23S rRNA. Forms part of two intersubunit bridges in the 70S ribosome. The protein is Large ribosomal subunit protein uL14 of Karelsulcia muelleri (strain GWSS) (Sulcia muelleri).